Consider the following 456-residue polypeptide: Probable serine/threonine-protein kinase DDB_G0277449 (456 aa).

A compositionally biased stretch (low complexity) spans Ser50–Asp83. A disordered region spans residues Ser50–Ser84. The Protein kinase domain maps to Phe128–Phe383. ATP contacts are provided by residues Val134–Val142 and Lys157. Asp251 functions as the Proton acceptor in the catalytic mechanism. Residues Lys384–Gln455 enclose the AGC-kinase C-terminal domain.

This sequence belongs to the protein kinase superfamily. AGC Ser/Thr protein kinase family.

It catalyses the reaction L-seryl-[protein] + ATP = O-phospho-L-seryl-[protein] + ADP + H(+). It carries out the reaction L-threonyl-[protein] + ATP = O-phospho-L-threonyl-[protein] + ADP + H(+). The protein is Probable serine/threonine-protein kinase DDB_G0277449 of Dictyostelium discoideum (Social amoeba).